Reading from the N-terminus, the 715-residue chain is Patatin-like phospholipase domain-containing protein ATEG_02594 (715 aa).

A helical transmembrane segment spans residues 84 to 104 (WPFLAFVLGWISFLGVAYILT). The region spanning 274–465 (LCLSGGATFA…RTDIPIKALN (192 aa)) is the PNPLA domain. A GXSXG motif is present at residues 305 to 309 (GTSGG). Ser307 serves as the catalytic Nucleophile. Residue Asp452 is the Proton acceptor of the active site. The tract at residues 613–715 (TAPRGGGRAT…DVDSDTWKGQ (103 aa)) is disordered. A compositionally biased stretch (basic and acidic residues) spans 652-661 (RTGEYSKEAD). The segment covering 665 to 678 (AEMSDSSGVDSATA) has biased composition (polar residues).

It belongs to the PLPL family.

It is found in the membrane. Functionally, probable lipid hydrolase. The chain is Patatin-like phospholipase domain-containing protein ATEG_02594 from Aspergillus terreus (strain NIH 2624 / FGSC A1156).